Reading from the N-terminus, the 419-residue chain is 4-hydroxyphenylpyruvate dioxygenase (419 aa).

2 consecutive VOC domains span residues 37-185 (GYDH…LLSR) and 216-376 (RIDH…LFTR). Positions 219, 302, and 387 each coordinate Fe cation.

It belongs to the 4HPPD family. Fe cation serves as cofactor.

The catalysed reaction is 3-(4-hydroxyphenyl)pyruvate + O2 = homogentisate + CO2. The protein operates within amino-acid degradation; L-phenylalanine degradation; acetoacetate and fumarate from L-phenylalanine: step 3/6. The protein is 4-hydroxyphenylpyruvate dioxygenase (HPD4) of Pyricularia oryzae (strain 70-15 / ATCC MYA-4617 / FGSC 8958) (Rice blast fungus).